A 727-amino-acid polypeptide reads, in one-letter code: BRCA1-A complex subunit RAP80 (727 aa).

Residues 1–23 form a disordered region; the sequence is MPRRKKKIKEASESQNLEKKDLE. The necessary for transcriptional repression stretch occupies residues 1–101; the sequence is MPRRKKKIKE…SEQEAREVNN (101 aa). Over residues 9 to 23 the composition is skewed to basic and acidic residues; the sequence is KEASESQNLEKKDLE. Lys20 is covalently cross-linked (Glycyl lysine isopeptide (Lys-Gly) (interchain with G-Cter in SUMO2)). Ser29 carries the phosphoserine modification. Residue Lys31 forms a Glycyl lysine isopeptide (Lys-Gly) (interchain with G-Cter in SUMO2) linkage. Residues Ser44 and Ser46 each carry the phosphoserine modification. A disordered region spans residues 45 to 70; that stretch reads DSDGEETKEENGLQKTKTKQSNRSKC. Thr51 is modified (phosphothreonine). Basic residues predominate over residues 60 to 70; the sequence is TKTKQSNRSKC. An LR motif motif is present at residues 60 to 78; the sequence is TKTKQSNRSKCLAKRKVAH. Residues Lys75 and Lys90 each participate in a glycyl lysine isopeptide (Lys-Gly) (interchain with G-Cter in SUMO2) cross-link. UIM domains follow at residues 80 to 99 and 104 to 124; these read SEEE…AREV and EKEE…CWSS. The segment at 97–103 is UIM-linker; it reads REVNNQE. The necessary for interaction with NR6A1 N-terminus stretch occupies residues 100–200; the sequence is NNQEEKEEEL…EEPVSGSSGS (101 aa). Residues 133-206 form a disordered region; sequence PLAAELSSHS…SSGSWDQSSQ (74 aa). Ser140 carries the post-translational modification Phosphoserine. Residues 176–188 show a composition bias toward basic and acidic residues; it reads AEQRKEPWDHNEN. The span at 195-206 shows a compositional bias: low complexity; that stretch reads SGSSGSWDQSSQ. Ser205 carries the phosphoserine modification. Lys245 participates in a covalent cross-link: Glycyl lysine isopeptide (Lys-Gly) (interchain with G-Cter in SUMO2). The AIR stretch occupies residues 270 to 400; the sequence is TGGTVHYYWG…EEEPTTSRGQ (131 aa). The segment at 326-427 is disordered; that stretch reads PRPPFLIQNE…SEGDNSVPTT (102 aa). Basic and acidic residues predominate over residues 355 to 364; it reads DEAKEERQES. Ser379 is subject to Phosphoserine. Residues Lys382 and Lys387 each participate in a glycyl lysine isopeptide (Lys-Gly) (interchain with G-Cter in SUMO2) cross-link. Residues 400–508 are necessary for interaction with NR6A1 C-terminus; the sequence is QSSQGLFVEE…ENPPPAVSSS (109 aa). Ser402 carries the phosphoserine modification. A Glycyl lysine isopeptide (Lys-Gly) (interchain with G-Cter in SUMO2) cross-link involves residue Lys436. The residue at position 474 (Ser474) is a Phosphoserine. The UBZ4-type zinc-finger motif lies at 510–537; that stretch reads RVSCPLCNQDFPPTKIEQHAMYCNGLME. Cys513, Cys516, His528, and Cys532 together coordinate Zn(2+). The segment at 513-590 is zinc-finger-like region; that stretch reads CPLCNQDFPP…GEYQCHVEAC (78 aa). Glycyl lysine isopeptide (Lys-Gly) (interchain with G-Cter in SUMO2) cross-links involve residues Lys552, Lys570, Lys595, and Lys617. Residues 607-654 form a disordered region; sequence RPRVCAPVEGKQQQRLKKSKDKGHSQGRLLSLLEQSEHRTTGVEKKPK. Ser637 is modified (phosphoserine). The span at 641–654 shows a compositional bias: basic and acidic residues; that stretch reads QSEHRTTGVEKKPK. A Glycyl lysine isopeptide (Lys-Gly) (interchain with G-Cter in SUMO2) cross-link involves residue Lys652. Ser665 and Ser689 each carry phosphoserine. Lys708 participates in a covalent cross-link: Glycyl lysine isopeptide (Lys-Gly) (interchain with G-Cter in SUMO2).

This sequence belongs to the RAP80 family. In terms of assembly, component of the ARISC complex, at least composed of UIMC1/RAP80, ABRAXAS1, BRCC3/BRCC36, BABAM2 and BABAM1/NBA1. Component of the BRCA1-A complex, at least composed of the BRCA1, BARD1, UIMC1/RAP80, ABRAXAS1, BRCC3/BRCC36, BABAM2 and BABAM1/NBA1. In the BRCA1-A complex, interacts directly with ABRAXAS1. Interacts with ESR1. Interacts with UBE2I. Interacts with NR6A1. Interacts with TSP57. Interacts with TRAIP. Sumoylated. In terms of processing, phosphorylated upon DNA damage by ATM or ATR.

Its subcellular location is the nucleus. In terms of biological role, ubiquitin-binding protein. Specifically recognizes and binds 'Lys-63'-linked ubiquitin. Plays a central role in the BRCA1-A complex by specifically binding 'Lys-63'-linked ubiquitinated histones H2A and H2AX at DNA lesions sites, leading to target the BRCA1-BARD1 heterodimer to sites of DNA damage at double-strand breaks (DSBs). The BRCA1-A complex also possesses deubiquitinase activity that specifically removes 'Lys-63'-linked ubiquitin on histones H2A and H2AX. Also weakly binds monoubiquitin but with much less affinity than 'Lys-63'-linked ubiquitin. May interact with monoubiquitinated histones H2A and H2B; the relevance of such results is however unclear in vivo. Does not bind Lys-48'-linked ubiquitin. May indirectly act as a transcriptional repressor by inhibiting the interaction of NR6A1 with the corepressor NCOR1. The sequence is that of BRCA1-A complex subunit RAP80 (Uimc1) from Mus musculus (Mouse).